The chain runs to 265 residues: Anamorsin homolog 1 (265 aa).

Residues M1–F143 form an N-terminal SAM-like domain region. The linker stretch occupies residues P144–L175. The [2Fe-2S] cluster site is built by C186, C195, C198, and C200. Residues C186–C200 form a fe-S binding site A region. [4Fe-4S] cluster contacts are provided by C226, C229, C237, and C240. Short sequence motifs (cx2C motif) lie at residues C226–C229 and C237–C240. The tract at residues C226 to C240 is fe-S binding site B.

Belongs to the anamorsin family. As to quaternary structure, monomer. The cofactor is [2Fe-2S] cluster. It depends on [4Fe-4S] cluster as a cofactor.

It is found in the cytoplasm. The protein resides in the mitochondrion intermembrane space. Its function is as follows. Component of the cytosolic iron-sulfur (Fe-S) protein assembly (CIA) machinery. Required for the maturation of extramitochondrial Fe-S proteins. Part of an electron transfer chain functioning in an early step of cytosolic Fe-S biogenesis, facilitating the de novo assembly of a [4Fe-4S] cluster on the cytosolic Fe-S scaffold complex. Electrons are transferred from NADPH via a FAD- and FMN-containing diflavin oxidoreductase. Together with the diflavin oxidoreductase, also required for the assembly of the diferric tyrosyl radical cofactor of ribonucleotide reductase (RNR), probably by providing electrons for reduction during radical cofactor maturation in the catalytic small subunit. This chain is Anamorsin homolog 1, found in Oryza sativa subsp. japonica (Rice).